The following is a 300-amino-acid chain: ADP,ATP carrier protein 2 (300 aa).

Solcar repeat units lie at residues 8–100 (VAFI…YKQV), 113–203 (RYFI…ARGM), and 214–299 (VSWA…IKKV). 5 helical membrane-spanning segments follow: residues 10–39 (FIKD…LLLQ), 77–101 (LANV…KQVF), 112–132 (TRYF…SLCF), 181–201 (VSVQ…DTAR), and 213–233 (YVSW…SYPF). ADP contacts are provided by Arg82 and Lys94. Arg237 is an ADP binding site. The important for transport activity stretch occupies residues 237–242 (RRRMMM). Positions 237–242 (RRRMMM) match the Nucleotide carrier signature motif motif. Residues 276–293 (AFSNVLRGTGGAFVLVLY) traverse the membrane as a helical segment.

The protein belongs to the mitochondrial carrier (TC 2.A.29) family. As to quaternary structure, monomer.

Its subcellular location is the mitochondrion inner membrane. The enzyme catalyses ADP(in) + ATP(out) = ADP(out) + ATP(in). Its activity is regulated as follows. The matrix-open state (m-state) is inhibited by the membrane-permeable bongkrekic acid (BKA). The cytoplasmic-open state (c-state) is inhibited by the membrane-impermeable toxic inhibitor carboxyatractyloside (CATR). ADP:ATP antiporter that mediates import of ADP into the mitochondrial matrix for ATP synthesis, and export of ATP out to fuel the cell. Cycles between the cytoplasmic-open state (c-state) and the matrix-open state (m-state): operates by the alternating access mechanism with a single substrate-binding site intermittently exposed to either the cytosolic (c-state) or matrix (m-state) side of the inner mitochondrial membrane. The protein is ADP,ATP carrier protein 2 of Anopheles gambiae (African malaria mosquito).